The chain runs to 1042 residues: Isoleucine--tRNA ligase (1042 aa).

Positions 48–58 (PFATGLPHFGH) match the 'HIGH' region motif. Positions 594-598 (KMSKS) match the 'KMSKS' region motif. Lys597 contributes to the ATP binding site.

Belongs to the class-I aminoacyl-tRNA synthetase family. IleS type 2 subfamily. As to quaternary structure, monomer. Zn(2+) is required as a cofactor.

Its subcellular location is the cytoplasm. It carries out the reaction tRNA(Ile) + L-isoleucine + ATP = L-isoleucyl-tRNA(Ile) + AMP + diphosphate. Catalyzes the attachment of isoleucine to tRNA(Ile). As IleRS can inadvertently accommodate and process structurally similar amino acids such as valine, to avoid such errors it has two additional distinct tRNA(Ile)-dependent editing activities. One activity is designated as 'pretransfer' editing and involves the hydrolysis of activated Val-AMP. The other activity is designated 'posttransfer' editing and involves deacylation of mischarged Val-tRNA(Ile). The polypeptide is Isoleucine--tRNA ligase (Borreliella afzelii (strain PKo) (Borrelia afzelii)).